We begin with the raw amino-acid sequence, 1399 residues long: DNA-directed RNA polymerase subunit beta' (1399 aa).

Zn(2+) contacts are provided by cysteine 71, cysteine 73, cysteine 86, and cysteine 89. Aspartate 462, aspartate 464, and aspartate 466 together coordinate Mg(2+). Residues cysteine 810, cysteine 884, cysteine 891, and cysteine 894 each contribute to the Zn(2+) site. A disordered region spans residues 1379 to 1399 (KQAAIVPSQPEPQPLALPPAE). Pro residues predominate over residues 1387–1399 (QPEPQPLALPPAE).

The protein belongs to the RNA polymerase beta' chain family. In terms of assembly, the RNAP catalytic core consists of 2 alpha, 1 beta, 1 beta' and 1 omega subunit. When a sigma factor is associated with the core the holoenzyme is formed, which can initiate transcription. Mg(2+) is required as a cofactor. The cofactor is Zn(2+).

It carries out the reaction RNA(n) + a ribonucleoside 5'-triphosphate = RNA(n+1) + diphosphate. In terms of biological role, DNA-dependent RNA polymerase catalyzes the transcription of DNA into RNA using the four ribonucleoside triphosphates as substrates. In Bradyrhizobium sp. (strain ORS 278), this protein is DNA-directed RNA polymerase subunit beta'.